We begin with the raw amino-acid sequence, 324 residues long: DNA primase small subunit PriS (324 aa).

Catalysis depends on residues aspartate 94, aspartate 96, and aspartate 274.

It belongs to the eukaryotic-type primase small subunit family. As to quaternary structure, heterodimer of a small subunit (PriS) and a large subunit (PriL). Mg(2+) serves as cofactor. The cofactor is Mn(2+).

In terms of biological role, catalytic subunit of DNA primase, an RNA polymerase that catalyzes the synthesis of short RNA molecules used as primers for DNA polymerase during DNA replication. The small subunit contains the primase catalytic core and has DNA synthesis activity on its own. Binding to the large subunit stabilizes and modulates the activity, increasing the rate of DNA synthesis while decreasing the length of the DNA fragments, and conferring RNA synthesis capability. The DNA polymerase activity may enable DNA primase to also catalyze primer extension after primer synthesis. May also play a role in DNA repair. The polypeptide is DNA primase small subunit PriS (Methanobrevibacter smithii (strain ATCC 35061 / DSM 861 / OCM 144 / PS)).